The primary structure comprises 155 residues: Small ribosomal subunit protein uS7c (155 aa).

It belongs to the universal ribosomal protein uS7 family. As to quaternary structure, part of the 30S ribosomal subunit.

It is found in the plastid. Its subcellular location is the chloroplast. One of the primary rRNA binding proteins, it binds directly to 16S rRNA where it nucleates assembly of the head domain of the 30S subunit. In Typha angustifolia (Narrow leaf cattail), this protein is Small ribosomal subunit protein uS7c (rps7).